The following is a 146-amino-acid chain: HTH-type transcriptional regulator FarR (146 aa).

The region spanning 7–139 is the HTH marR-type domain; it reads HASINIGLIQ…LKDLLAELAK (133 aa). Residues 53-76 constitute a DNA-binding region (H-T-H motif); the sequence is FQDLANQACILRPSLTGILTRLEK.

Its activity is regulated as follows. Repressor activity requires the presence of the Integration Host Factor (IHF), which binds to sequences located between FarR binding sites A and C. IHF binding to the promoter region stabilizes the binding of FarR to its binding sites A and C and as a consequence, enhances repression of the farAB operon. Negatively controls expression of the farAB operon by binding directly to the farAB promoter region. Binds to three sites (sites A, B and C) within the DNA sequence upstream of farA. Also represses its own expression. In Neisseria gonorrhoeae, this protein is HTH-type transcriptional regulator FarR.